The chain runs to 264 residues: NAD kinase (264 aa).

Catalysis depends on D45, which acts as the Proton acceptor. Residues 45-46 (DG), 121-122 (NE), R147, D149, A184, and Q221 contribute to the NAD(+) site.

It belongs to the NAD kinase family. It depends on a divalent metal cation as a cofactor.

It is found in the cytoplasm. It carries out the reaction NAD(+) + ATP = ADP + NADP(+) + H(+). Its function is as follows. Involved in the regulation of the intracellular balance of NAD and NADP, and is a key enzyme in the biosynthesis of NADP. Catalyzes specifically the phosphorylation on 2'-hydroxyl of the adenosine moiety of NAD to yield NADP. The polypeptide is NAD kinase (Leuconostoc mesenteroides subsp. mesenteroides (strain ATCC 8293 / DSM 20343 / BCRC 11652 / CCM 1803 / JCM 6124 / NCDO 523 / NBRC 100496 / NCIMB 8023 / NCTC 12954 / NRRL B-1118 / 37Y)).